A 121-amino-acid chain; its full sequence is NADPH-dependent 7-cyano-7-deazaguanine reductase (121 aa).

Residue Cys-36 is the Thioimide intermediate of the active site. The active-site Proton donor is Asp-43. Residues 58–60 and 77–78 each bind substrate; these read VEL and YE.

It belongs to the GTP cyclohydrolase I family. QueF type 1 subfamily.

It localises to the cytoplasm. It catalyses the reaction 7-aminomethyl-7-carbaguanine + 2 NADP(+) = 7-cyano-7-deazaguanine + 2 NADPH + 3 H(+). The protein operates within tRNA modification; tRNA-queuosine biosynthesis. Its function is as follows. Catalyzes the NADPH-dependent reduction of 7-cyano-7-deazaguanine (preQ0) to 7-aminomethyl-7-deazaguanine (preQ1). The chain is NADPH-dependent 7-cyano-7-deazaguanine reductase from Rhodopirellula baltica (strain DSM 10527 / NCIMB 13988 / SH1).